A 314-amino-acid chain; its full sequence is 4-hydroxy-3-methylbut-2-enyl diphosphate reductase (314 aa).

Cysteine 12 contributes to the [4Fe-4S] cluster binding site. Residues histidine 41 and histidine 74 each coordinate (2E)-4-hydroxy-3-methylbut-2-enyl diphosphate. Histidine 41 and histidine 74 together coordinate dimethylallyl diphosphate. Residues histidine 41 and histidine 74 each coordinate isopentenyl diphosphate. Cysteine 96 lines the [4Fe-4S] cluster pocket. Histidine 124 serves as a coordination point for (2E)-4-hydroxy-3-methylbut-2-enyl diphosphate. Histidine 124 contributes to the dimethylallyl diphosphate binding site. Residue histidine 124 coordinates isopentenyl diphosphate. Glutamate 126 acts as the Proton donor in catalysis. Threonine 167 serves as a coordination point for (2E)-4-hydroxy-3-methylbut-2-enyl diphosphate. Cysteine 197 contributes to the [4Fe-4S] cluster binding site. (2E)-4-hydroxy-3-methylbut-2-enyl diphosphate-binding residues include serine 225, serine 226, asparagine 227, and serine 269. Serine 225, serine 226, asparagine 227, and serine 269 together coordinate dimethylallyl diphosphate. Positions 225, 226, 227, and 269 each coordinate isopentenyl diphosphate.

This sequence belongs to the IspH family. [4Fe-4S] cluster is required as a cofactor.

The catalysed reaction is isopentenyl diphosphate + 2 oxidized [2Fe-2S]-[ferredoxin] + H2O = (2E)-4-hydroxy-3-methylbut-2-enyl diphosphate + 2 reduced [2Fe-2S]-[ferredoxin] + 2 H(+). It catalyses the reaction dimethylallyl diphosphate + 2 oxidized [2Fe-2S]-[ferredoxin] + H2O = (2E)-4-hydroxy-3-methylbut-2-enyl diphosphate + 2 reduced [2Fe-2S]-[ferredoxin] + 2 H(+). It participates in isoprenoid biosynthesis; dimethylallyl diphosphate biosynthesis; dimethylallyl diphosphate from (2E)-4-hydroxy-3-methylbutenyl diphosphate: step 1/1. It functions in the pathway isoprenoid biosynthesis; isopentenyl diphosphate biosynthesis via DXP pathway; isopentenyl diphosphate from 1-deoxy-D-xylulose 5-phosphate: step 6/6. In terms of biological role, catalyzes the conversion of 1-hydroxy-2-methyl-2-(E)-butenyl 4-diphosphate (HMBPP) into a mixture of isopentenyl diphosphate (IPP) and dimethylallyl diphosphate (DMAPP). Acts in the terminal step of the DOXP/MEP pathway for isoprenoid precursor biosynthesis. The sequence is that of 4-hydroxy-3-methylbut-2-enyl diphosphate reductase from Histophilus somni (strain 2336) (Haemophilus somnus).